We begin with the raw amino-acid sequence, 348 residues long: Heat-inducible transcription repressor HrcA (348 aa).

The protein belongs to the HrcA family.

In terms of biological role, negative regulator of class I heat shock genes (grpE-dnaK-dnaJ and groELS operons). Prevents heat-shock induction of these operons. This is Heat-inducible transcription repressor HrcA from Ruminiclostridium cellulolyticum (strain ATCC 35319 / DSM 5812 / JCM 6584 / H10) (Clostridium cellulolyticum).